The following is a 156-amino-acid chain: 6,7-dimethyl-8-ribityllumazine synthase (156 aa).

5-amino-6-(D-ribitylamino)uracil contacts are provided by residues phenylalanine 22, alanine 57 to glutamate 59, and threonine 81 to isoleucine 83. Glycine 86–threonine 87 provides a ligand contact to (2S)-2-hydroxy-3-oxobutyl phosphate. Histidine 89 (proton donor) is an active-site residue. Phenylalanine 114 contributes to the 5-amino-6-(D-ribitylamino)uracil binding site. Residue arginine 128 participates in (2S)-2-hydroxy-3-oxobutyl phosphate binding.

The protein belongs to the DMRL synthase family. In terms of assembly, forms an icosahedral capsid composed of 60 subunits, arranged as a dodecamer of pentamers.

The catalysed reaction is (2S)-2-hydroxy-3-oxobutyl phosphate + 5-amino-6-(D-ribitylamino)uracil = 6,7-dimethyl-8-(1-D-ribityl)lumazine + phosphate + 2 H2O + H(+). Its pathway is cofactor biosynthesis; riboflavin biosynthesis; riboflavin from 2-hydroxy-3-oxobutyl phosphate and 5-amino-6-(D-ribitylamino)uracil: step 1/2. Functionally, catalyzes the formation of 6,7-dimethyl-8-ribityllumazine by condensation of 5-amino-6-(D-ribitylamino)uracil with 3,4-dihydroxy-2-butanone 4-phosphate. This is the penultimate step in the biosynthesis of riboflavin. This Citrobacter koseri (strain ATCC BAA-895 / CDC 4225-83 / SGSC4696) protein is 6,7-dimethyl-8-ribityllumazine synthase.